The sequence spans 847 residues: B-cell receptor CD22 (847 aa).

Residues 1–19 (MHLLGPWLLLLVLEYLAFS) form the signal peptide. Residues 20–138 (DSSKWAFEHP…MERIHLNVSE (119 aa)) form the Ig-like V-type domain. At 20–687 (DSSKWAFEHP…YYSPETIGRR (668 aa)) the chain is on the extracellular side. N-linked (GlcNAc...) asparagine glycosylation is found at N67, N101, and N112. Residue R120 participates in N-acetylneuraminate binding. 3 N-linked (GlcNAc...) asparagine glycosylation sites follow: N135, N164, and N231. Ig-like C2-type domains are found at residues 143–235 (PHIQ…DTVQ), 242–326 (PKLE…VFLQ), 331–416 (PEPS…LDVQ), 419–500 (PKKV…VALN), 505–582 (PRDV…QTAS), and 593–676 (PRRL…STLT). A disulfide bridge connects residues C161 and C219. 2 disulfides stabilise this stretch: C265–C309 and C353–C396. N-linked (GlcNAc...) asparagine glycosylation is found at N363, N428, N445, N448, and N479. Intrachain disulfides connect C442/C484 and C529/C571. Residues N574 and N634 are each glycosylated (N-linked (GlcNAc...) asparagine). C616 and C659 are disulfide-bonded. The helical transmembrane segment at 688 to 708 (VAVGFGSCLAILILAICGLKL) threads the bilayer. Residues 709 to 847 (QRRWKRTQSQ…ENVDYVILKH (139 aa)) lie on the Cytoplasmic side of the membrane. 3 positions are modified to phosphoserine: S725, S726, and S729. 2 short sequence motifs (ITIM motif) span residues 760-765 (ISYTTL) and 794-799 (VTYSVL). The residue at position 762 (Y762) is a Phosphotyrosine. 3 positions are modified to phosphotyrosine: Y807, Y822, and Y842. 2 consecutive short sequence motifs (ITIM motif) follow at residues 820 to 825 (IHYSEL) and 840 to 845 (VDYVIL).

The protein belongs to the immunoglobulin superfamily. SIGLEC (sialic acid binding Ig-like lectin) family. In terms of assembly, predominantly monomer of isoform CD22-beta. Also found as heterodimer of isoform CD22-beta and a shorter isoform. Interacts with PTPN6/SHP-1, LYN, SYK, PIK3R1/PIK3R2 and PLCG1 upon phosphorylation. Interacts with GRB2, INPP5D and SHC1 upon phosphorylation. May form a complex with INPP5D/SHIP, GRB2 and SHC1. Phosphorylation of Tyr-762, Tyr-807 and Tyr-822 are involved in binding to SYK, GRB2 and SYK, respectively. Phosphorylation of Tyr-842 is involved in binding to SYK, PLCG2 and PIK3R1/PIK3R2. In terms of processing, phosphorylated on tyrosine residues by LYN.

It localises to the cell membrane. Functionally, most highly expressed siglec (sialic acid-binding immunoglobulin-like lectin) on B-cells that plays a role in various aspects of B-cell biology including differentiation, antigen presentation, and trafficking to bone marrow. Binds to alpha 2,6-linked sialic acid residues of surface molecules such as CD22 itself, CD45 and IgM in a cis configuration. Can also bind to ligands on other cells as an adhesion molecule in a trans configuration. Acts as an inhibitory coreceptor on the surface of B-cells and inhibits B-cell receptor induced signaling, characterized by inhibition of the calcium mobilization and cellular activation. Mechanistically, the immunoreceptor tyrosine-based inhibitory motif domain is phosphorylated by the Src kinase LYN, which in turn leads to the recruitment of the protein tyrosine phosphatase 1/PTPN6, leading to the negative regulation of BCR signaling. If this negative signaling from is of sufficient strength, apoptosis of the B-cell can be induced. The polypeptide is B-cell receptor CD22 (Pan paniscus (Pygmy chimpanzee)).